The following is a 268-amino-acid chain: MADPRPDPDELARRAAQVIADRTGIGEHDVAVVLGSGWLPAVAALGSPTTVLPQAELPGFVPPTAAGHAGELLSVPIGAHRVLVLAGRIHAYEGHDLRYVVHPVRAARAAGAQIMVLTNAAGGLRADLQVGQPVLISDHLNLTARSPLVGGEFVDLTDAYSPRLRELARQSDPQLAEGVYAGLPGPHYETPAEIRMLQTLGADLVGMSTVHETIAARAAGAEVLGVSLVTNLAAGITGEPLSHAEVLAAGAASATRMGALLADVIARF.

Phosphate is bound by residues Ser36, His68, 88–90 (RIH), and Ala120. Glu189 contacts a purine D-ribonucleoside. Ser208 provides a ligand contact to phosphate. Asn231 serves as a coordination point for a purine D-ribonucleoside.

Belongs to the PNP/MTAP phosphorylase family. Homotrimer.

It carries out the reaction a purine 2'-deoxy-D-ribonucleoside + phosphate = a purine nucleobase + 2-deoxy-alpha-D-ribose 1-phosphate. The protein operates within purine metabolism; purine nucleoside salvage. Functionally, the purine nucleoside phosphorylases catalyze the phosphorolytic breakdown of the N-glycosidic bond in the beta-(deoxy)ribonucleoside molecules, with the formation of the corresponding free purine bases and pentose-1-phosphate. Cleaves guanosine, inosine, 2'-deoxyguanosine and 2'-deoxyinosine. The protein is Purine nucleoside phosphorylase (punA) of Mycobacterium bovis (strain ATCC BAA-935 / AF2122/97).